Reading from the N-terminus, the 88-residue chain is Exodeoxyribonuclease 7 small subunit (88 aa).

Belongs to the XseB family. Heterooligomer composed of large and small subunits.

The protein resides in the cytoplasm. The catalysed reaction is Exonucleolytic cleavage in either 5'- to 3'- or 3'- to 5'-direction to yield nucleoside 5'-phosphates.. Its function is as follows. Bidirectionally degrades single-stranded DNA into large acid-insoluble oligonucleotides, which are then degraded further into small acid-soluble oligonucleotides. The sequence is that of Exodeoxyribonuclease 7 small subunit from Bordetella bronchiseptica (strain ATCC BAA-588 / NCTC 13252 / RB50) (Alcaligenes bronchisepticus).